The following is a 373-amino-acid chain: tRNA-specific 2-thiouridylase MnmA (373 aa).

ATP-binding positions include 12-19 and Met-38; that span reads GMSGGVDS. The segment at 98-100 is interaction with target base in tRNA; it reads NPD. The active-site Nucleophile is Cys-103. An intrachain disulfide couples Cys-103 to Cys-200. Position 127 (Gly-127) interacts with ATP. Residues 150–152 form an interaction with tRNA region; the sequence is KDQ. Cys-200 (cysteine persulfide intermediate) is an active-site residue. The interaction with tRNA stretch occupies residues 312-313; the sequence is RY.

Belongs to the MnmA/TRMU family.

The protein localises to the cytoplasm. It carries out the reaction S-sulfanyl-L-cysteinyl-[protein] + uridine(34) in tRNA + AH2 + ATP = 2-thiouridine(34) in tRNA + L-cysteinyl-[protein] + A + AMP + diphosphate + H(+). Functionally, catalyzes the 2-thiolation of uridine at the wobble position (U34) of tRNA, leading to the formation of s(2)U34. The polypeptide is tRNA-specific 2-thiouridylase MnmA (Streptococcus pneumoniae (strain Hungary19A-6)).